We begin with the raw amino-acid sequence, 54 residues long: Putative collagen-like domain-containing protein 065L (54 aa).

The tract at residues 1–54 is disordered; sequence MRGLEAPGAVGPTGPSGAPGSQGPDGDVGGMGPEGPKGDDGPVGPKGPQGAAIF. A Collagen-like domain is found at 7–51; the sequence is PGAVGPTGPSGAPGSQGPDGDVGGMGPEGPKGDDGPVGPKGPQGA. Positions 26 to 35 are enriched in gly residues; the sequence is GDVGGMGPEG. The segment covering 42–54 has biased composition (low complexity); sequence PVGPKGPQGAAIF.

In Dryophytes versicolor (chameleon treefrog), this protein is Putative collagen-like domain-containing protein 065L.